Here is a 964-residue protein sequence, read N- to C-terminus: A-type ATP synthase subunit A (964 aa).

The region spanning 392–518 is the DOD-type homing endonuclease domain; sequence FLGYLMANGT…LSYLFAKLGI (127 aa).

It belongs to the ATPase alpha/beta chains family. In terms of assembly, has multiple subunits with at least A(3), B(3), C, D, E, F, H, I and proteolipid K(x). Post-translationally, this protein undergoes a protein self splicing that involves a post-translational excision of the VDE intervening region (intein) followed by peptide ligation.

It is found in the cell membrane. The enzyme catalyses ATP + H2O + 4 H(+)(in) = ADP + phosphate + 5 H(+)(out). In terms of biological role, component of the A-type ATP synthase that produces ATP from ADP in the presence of a proton gradient across the membrane. The A chain is the catalytic subunit. The chain is A-type ATP synthase subunit A from Pyrococcus horikoshii (strain ATCC 700860 / DSM 12428 / JCM 9974 / NBRC 100139 / OT-3).